A 148-amino-acid polypeptide reads, in one-letter code: Receptor activity-modifying protein 1 (148 aa).

Positions 1 to 26 (MARALCRLPRRGLWLLLAHHLFMTTA) are cleaved as a signal peptide. Intrachain disulfides connect Cys-27–Cys-82, Cys-40–Cys-72, and Cys-57–Cys-104. The Extracellular portion of the chain corresponds to 27 to 118 (CQEANYGALL…RAVRDPPGSI (92 aa)). The chain crosses the membrane as a helical span at residues 119–140 (LYPFIVVPITVTLLVTALVVWQ). The Cytoplasmic portion of the chain corresponds to 141-148 (SKRTEGIV).

This sequence belongs to the RAMP family. In terms of assembly, heterodimer of CALCRL and RAMP1; the interaction induces allosteric modulation of CALCRL function and CGRP1/CALCA and CGRP2/CALCB ligand specificity. Heterodimer of CALCR and RAMP1; interaction forms the AMYR1 receptor complex for amylin/IAPP and CGRP1/CALCA ligands. As to expression, expressed in many tissues including the uterus, bladder, brain, pancreas and gastro-intestinal tract.

It localises to the cell membrane. Its function is as follows. Accessory protein that interacts with and modulates the function of G-protein coupled receptors including calcitonin gene-related peptide type 1 receptor (CALCRL) and calcitonin receptor (CALCR). Required for the transport of CALCRL to the plasma membrane. Together with CALCRL, form the receptor complex for the calcitonin gene-related peptides CGRP1/CALCA and CGRP2/CALCB. Together with CALCR, form the AMYR1 receptor complex for amylin/IAPP and CGRP1/CALCA. The protein is Receptor activity-modifying protein 1 of Homo sapiens (Human).